Consider the following 340-residue polypeptide: Flap endonuclease 1 (340 aa).

Positions 1–98 are N-domain; sequence MGVDLGGLVE…ETIKARAEVR (98 aa). Mg(2+) contacts are provided by aspartate 27, aspartate 80, glutamate 151, glutamate 153, aspartate 172, aspartate 174, and aspartate 235. The tract at residues 115–256 is I-domain; that stretch reads EAYKYAQAST…TALKLVKKHG (142 aa). Residues 332–340 form an interaction with PCNA region; sequence KQKTLSSWF.

Belongs to the XPG/RAD2 endonuclease family. FEN1 subfamily. In terms of assembly, interacts with PCNA. PCNA stimulates the nuclease activity without altering cleavage specificity. It depends on Mg(2+) as a cofactor.

Its function is as follows. Structure-specific nuclease with 5'-flap endonuclease and 5'-3' exonuclease activities involved in DNA replication and repair. During DNA replication, cleaves the 5'-overhanging flap structure that is generated by displacement synthesis when DNA polymerase encounters the 5'-end of a downstream Okazaki fragment. Binds the unpaired 3'-DNA end and kinks the DNA to facilitate 5' cleavage specificity. Cleaves one nucleotide into the double-stranded DNA from the junction in flap DNA, leaving a nick for ligation. Also involved in the base excision repair (BER) pathway. Acts as a genome stabilization factor that prevents flaps from equilibrating into structures that lead to duplications and deletions. Also possesses 5'-3' exonuclease activity on nicked or gapped double-stranded DNA. This is Flap endonuclease 1 from Methanocella arvoryzae (strain DSM 22066 / NBRC 105507 / MRE50).